Consider the following 577-residue polypeptide: Insulin-like growth factor 2 mRNA-binding protein 1 (577 aa).

2 consecutive RRM domains span residues 2–75 and 81–156; these read NKLY…HSVP and RKIQ…YIPD. Phosphoserine is present on residues serine 12 and serine 73. The segment at 156–190 is disordered; that stretch reads DEQITQGPENGRRGGFGSRGQPRQGSPVAAGAPAK. Position 181 is a phosphoserine; by MTOR (serine 181). KH domains are found at residues 195–260, 276–343, 405–470, and 487–553; these read DIPL…CKMI, EVPL…EQEI, QEMV…QGRI, and KLET…QRKI. A sufficient for nuclear export region spans residues 312–323; it reads ISSLQDLTLYNP. The tract at residues 485–495 is sufficient for nuclear export; that stretch reads EVKLETHIRVP. Position 528 is a phosphothreonine (threonine 528).

It belongs to the RRM IMP/VICKZ family. Can form homodimers and heterodimers with IGF2BP1 and IGF2BP3. Component of the coding region determinant (CRD)-mediated complex, composed of DHX9, HNRNPU, IGF2BP1, SYNCRIP and YBX1. Identified in a mRNP complex, at least composed of DHX9, DDX3X, ELAVL1, HNRNPU, IGF2BP1, ILF3, PABPC1, PCBP2, PTBP2, STAU1, STAU2, SYNCRIP and YBX1. Associates with mRNP complex. Interacts with FMR1. Component of a multisubunit autoregulatory RNP complex (ARC), at least composed of IGF2BP1, PABPC1 and CSDE1. Interacts with AGO1 and AGO2. Interacts, through domains KH3 and KH4, with PABPC1 in an RNA-independent manner. Component of a TAU mRNP complex, at least composed of IGF2BP1, ELAVL4 and G3BP. Interacts with ELAVL4 in an RNA-dependent manner. Associates with microtubules and polysomes. Interacts with ELAVL1 and MATR3. In terms of processing, phosphorylated at Ser-181 by mTORC2 cotranslationally, promoting binding to the 3'-UTR of IGF2 mRNA. In terms of tissue distribution, expressed in zygotes and blastocysts (at protein level). Expressed in brain, skeletal muscle, trophoblasts of placenta, oocytes and spermatogonia (at protein level). Expressed in testis and ovary. Following colon injury, expressed in the wound bed mesenchyme during the first phase of repair, probably by colonic mesenchymal stem cells (at protein level).

It localises to the nucleus. The protein localises to the cytoplasm. The protein resides in the perinuclear region. Its subcellular location is the P-body. It is found in the stress granule. It localises to the cell projection. The protein localises to the lamellipodium. The protein resides in the dendrite. Its subcellular location is the dendritic spine. It is found in the growth cone. It localises to the filopodium. The protein localises to the axon. RNA-binding factor that recruits target transcripts to cytoplasmic protein-RNA complexes (mRNPs). This transcript 'caging' into mRNPs allows mRNA transport and transient storage. It also modulates the rate and location at which target transcripts encounter the translational apparatus and shields them from endonuclease attacks or microRNA-mediated degradation. Preferentially binds to N6-methyladenosine (m6A)-containing mRNAs and increases their stability. Regulates localized beta-actin/ACTB mRNA translation, a crucial process for cell polarity, cell migration and neurite outgrowth. Co-transcriptionally associates with the ACTB mRNA in the nucleus. This binding involves a conserved 54-nucleotide element in the ACTB mRNA 3'-UTR, known as the 'zipcode'. The RNP thus formed is exported to the cytoplasm, binds to a motor protein and is transported along the cytoskeleton to the cell periphery. During transport, prevents ACTB mRNA from being translated into protein. When the RNP complex reaches its destination near the plasma membrane, IGF2BP1 is phosphorylated. This releases the mRNA, allowing ribosomal 40S and 60S subunits to assemble and initiate ACTB protein synthesis. Monomeric ACTB then assembles into the subcortical actin cytoskeleton. During neuronal development, key regulator of neurite outgrowth, growth cone guidance and neuronal cell migration, presumably through the spatiotemporal fine tuning of protein synthesis, such as that of ACTB. May regulate mRNA transport to activated synapses. Binds to the 3'-UTR of CD44 mRNA and stabilizes it, hence promotes cell adhesion and invadopodia formation in cancer cells. Binds to the oncofetal H19 transcript and regulates its localization. Binds to and stabilizes BTRC/FBW1A mRNA. Binds to the adenine-rich autoregulatory sequence (ARS) located in PABPC1 mRNA and represses its translation. PABPC1 mRNA-binding is stimulated by PABPC1 protein. Prevents BTRC/FBW1A mRNA degradation by disrupting microRNA-dependent interaction with AGO2. During cellular stress, such as oxidative stress or heat shock, stabilizes target mRNAs that are recruited to stress granules, including CD44, IGF2, MAPK4, MYC, PTEN, RAPGEF2 and RPS6KA5 transcripts. Interacts with GAP43 transcript and transports it to axons. Binds to the 3'-UTR of IGF2 mRNA by a mechanism of cooperative and sequential dimerization and regulates IGF2 mRNA subcellular localization and translation. Binds to MYC mRNA, in the coding region instability determinant (CRD) of the open reading frame (ORF), hence prevents MYC cleavage by endonucleases and possibly microRNA targeting to MYC-CRD. Binding to MYC mRNA is enhanced by m6A-modification of the CRD. Binds to and stabilizes ABCB1/MDR-1 mRNA. Binds to the neuron-specific TAU mRNA and regulates its localization. Plays a direct role in the transport and translation of transcripts required for axonal regeneration in adult sensory neurons. During interstinal wound repair, interacts with and stabilizes PTGS2 transcript. PTGS2 mRNA stabilization may be crucial for colonic mucosal wound healing. This is Insulin-like growth factor 2 mRNA-binding protein 1 (Igf2bp1) from Mus musculus (Mouse).